A 437-amino-acid chain; its full sequence is Glutamate-1-semialdehyde 2,1-aminomutase 1 (437 aa).

Residue Lys-268 is modified to N6-(pyridoxal phosphate)lysine.

The protein belongs to the class-III pyridoxal-phosphate-dependent aminotransferase family. HemL subfamily. As to quaternary structure, homodimer. Pyridoxal 5'-phosphate is required as a cofactor.

The protein localises to the cytoplasm. It catalyses the reaction (S)-4-amino-5-oxopentanoate = 5-aminolevulinate. It participates in porphyrin-containing compound metabolism; protoporphyrin-IX biosynthesis; 5-aminolevulinate from L-glutamyl-tRNA(Glu): step 2/2. The chain is Glutamate-1-semialdehyde 2,1-aminomutase 1 from Halalkalibacterium halodurans (strain ATCC BAA-125 / DSM 18197 / FERM 7344 / JCM 9153 / C-125) (Bacillus halodurans).